The sequence spans 233 residues: Antiholin-like protein LrgB (233 aa).

7 helical membrane passes run 7–27, 33–53, 63–83, 97–117, 124–144, 152–172, and 212–232; these read INTPYFGILLSLIPFIIATFL, GFFLFTPLFVSMVVGIAFLKL, IGGDIINFFLEPATICFAIPL, ILGGITLGTTAALVCIYLIAE, GIIASMLPQGATTAIALPVSA, LTSLAVILNGVIIYALGSKLI, and ISLVIVGVIVVIVAPILATLL.

Belongs to the CidB/LrgB family. LrgB subfamily.

It localises to the cell membrane. Functionally, inhibits the expression or activity of extracellular murein hydrolases by interacting, possibly with LrgA, with the holin-like proteins CidA and/or CidB. The LrgAB and CidAB proteins may affect the proton motive force of the membrane. May be involved in programmed cell death (PCD), possibly triggering PCD in response to antibiotics and environmental stresses. This chain is Antiholin-like protein LrgB, found in Staphylococcus saprophyticus subsp. saprophyticus (strain ATCC 15305 / DSM 20229 / NCIMB 8711 / NCTC 7292 / S-41).